The following is a 1056-amino-acid chain: Potassium transporter TRK1 (1056 aa).

Residues 1-46 are Cytoplasmic-facing; the sequence is MLYRVSGFYKRHTRNFTNIDYGYYIRNFIHHIASKIYPYAKVVLPN. Residues 47 to 67 traverse the membrane as a helical segment; the sequence is FRAAHYFYILTLVILGSILVY. Residues 68–73 are Extracellular-facing; sequence PVKTCA. The stretch at 74–90 is an intramembrane region; that stretch reads YIDVLFFTAGASTQAGL. The Extracellular portion of the chain corresponds to 91 to 99; the sequence is NTVNVNDLS. Residues 100 to 122 traverse the membrane as a helical segment; it reads LYQQIVLYLLATLATPIFIHGSL. The Cytoplasmic segment spans residues 123-622; that stretch reads LFVRLYYFER…LGGIEYRAVK (500 aa). 3 disordered regions span residues 180–276, 290–350, and 404–571; these read REAE…IDPE, KNQE…EDED, and PWTS…SIEN. The span at 186–203 shows a compositional bias: low complexity; that stretch reads SSSSPQSSSSQTSQPVST. Basic and acidic residues predominate over residues 236–245; the sequence is EKIHFEEPQR. Positions 335 to 344 are enriched in polar residues; it reads PATNSVGTGN. Residues 412 to 423 are compositionally biased toward low complexity; sequence TLSNSSKKGSLS. Composition is skewed to acidic residues over residues 428–449 and 469–487; these read DTED…SDIS and YEED…DDGE. The segment covering 521–533 has biased composition (polar residues); sequence RSNTLDTPQQNTS. The span at 537–549 shows a compositional bias: basic residues; sequence KIRKKAPKRKTPR. The segment covering 553–563 has biased composition (polar residues); the sequence is NASFNQHSNVS. Residues 623-646 traverse the membrane as a helical segment; that stretch reads LLIKIIVVYYVGFNIIPGVMLSIW. At 647-665 the chain is on the extracellular side; sequence IYCMPHYKNLMISSSISPA. The stretch at 666–682 is an intramembrane region; the sequence is WWAFFTSQSSFNDLGLT. Over 683–693 the chain is Extracellular; that stretch reads LTSNSMMSFNQ. Residues 694–710 traverse the membrane as a helical segment; sequence NAFVQILCSFLIVIGNT. At 711 to 754 the chain is on the cytoplasmic side; that stretch reads GFPILLRFIIWVMFKTARPLSLYKESLGFLLDHPRRCFTLLFPS. Residues 755–778 traverse the membrane as a helical segment; that stretch reads VPTWWLFFILVVLNGFDLVIFCIL. Residues 779–793 lie on the Extracellular side of the membrane; that stretch reads DLHDDTFKGVDMGYR. Residues 794–810 lie within the membrane without spanning it; that stretch reads VLNGLFQAFCTRTVGFS. At 811 to 817 the chain is on the extracellular side; it reads VMDLSQL. A helical transmembrane segment spans residues 818 to 841; that stretch reads HAATQVSYLIMMYISVLPIAISVR. The Cytoplasmic segment spans residues 842 to 874; that stretch reads RTNVYEEQSLGVYAKENAEGVDESAPSNYVGSH. The helical transmembrane segment at 875 to 896 threads the bilayer; that stretch reads LRNQLSYDLWYICLGLFIICIA. The Extracellular portion of the chain corresponds to 897-909; it reads EGKRLKEQDLRFS. An intramembrane segment occupies 910–928; that stretch reads IFAVLFEIVSAYGTVGMSM. Over 929–942 the chain is Extracellular; it reads GYPGVDCSLSGEFN. A helical transmembrane segment spans residues 943-965; it reads VISKLVIIAMMIRGRHRGLPYTI. Residues 966–1056 are Cytoplasmic-facing; the sequence is DRAIMLPNAA…RYVVRTVSEV (91 aa).

This sequence belongs to the TrkH potassium transport family.

The protein resides in the cell membrane. The catalysed reaction is K(+)(in) = K(+)(out). It catalyses the reaction chloride(in) = chloride(out). With respect to regulation, TRK1-mediated chloride conductance is blocked by 4,4'-diisothiocyanatostilbene-2,2'-disulfonic acid. Its function is as follows. Potassium transporter that mediates K(+) influx, as well as Cl(-) efflux as a secondary function. TRK1 is the major K(+) uptake transporter that regulates membrane potential and intracellular pH. The TRK1-mediated Cl(-) efflux should serve as a Cl(-) detoxification route and may play a role in sustaining C.albicans on mammalian epithelial surfaces, or in physiological saline solutions such as saliva. Functionally, mediates candidacidal activities of cysteine-free peptides, but not of defensins. The hallmark of salivary gland-secreted histatin-5 (Hst 5) killing of C.albicans is the rapid efflux of cellular ATP and other small nucleotides and ions from the cell as well as concurrent intracellular uptake of propidium iodide (PI). TRK1 is the channel for Hst 5-induced killing and histatin-5 may directly or indirectly alter TRK1 function, allowing the efflux of larger anions, including ATP, and the influx of small cationic dyes, such as PI. The protein is Potassium transporter TRK1 of Candida albicans (strain SC5314 / ATCC MYA-2876) (Yeast).